Here is a 296-residue protein sequence, read N- to C-terminus: Nitrogenase iron protein (296 aa).

11-18 (GKGGIGKS) provides a ligand contact to ATP. A [4Fe-4S] cluster-binding site is contributed by C99. R102 is subject to ADP-ribosylarginine; by dinitrogenase reductase ADP-ribosyltransferase. C134 provides a ligand contact to [4Fe-4S] cluster.

The protein belongs to the NifH/BchL/ChlL family. Homodimer. [4Fe-4S] cluster serves as cofactor. The reversible ADP-ribosylation of Arg-102 inactivates the nitrogenase reductase and regulates nitrogenase activity.

It carries out the reaction N2 + 8 reduced [2Fe-2S]-[ferredoxin] + 16 ATP + 16 H2O = H2 + 8 oxidized [2Fe-2S]-[ferredoxin] + 2 NH4(+) + 16 ADP + 16 phosphate + 6 H(+). In terms of biological role, the key enzymatic reactions in nitrogen fixation are catalyzed by the nitrogenase complex, which has 2 components: the iron protein and the molybdenum-iron protein. The protein is Nitrogenase iron protein of Dechloromonas aromatica (strain RCB).